Consider the following 151-residue polypeptide: 3-hydroxyacyl-[acyl-carrier-protein] dehydratase FabZ (151 aa).

The active site involves H54.

It belongs to the thioester dehydratase family. FabZ subfamily.

The protein localises to the cytoplasm. It catalyses the reaction a (3R)-hydroxyacyl-[ACP] = a (2E)-enoyl-[ACP] + H2O. Functionally, involved in unsaturated fatty acids biosynthesis. Catalyzes the dehydration of short chain beta-hydroxyacyl-ACPs and long chain saturated and unsaturated beta-hydroxyacyl-ACPs. This chain is 3-hydroxyacyl-[acyl-carrier-protein] dehydratase FabZ, found in Blochmanniella floridana.